A 293-amino-acid chain; its full sequence is Microtubule-associated protein RP/EB family member 1B (293 aa).

Residues 13-115 (FVGRNEILSW…FLQWLKRFCD (103 aa)) enclose the Calponin-homology (CH) domain. Disordered regions lie at residues 124-188 (ENYN…SAEV) and 262-293 (LGLE…ETQT). Residues 129 to 141 (VERRSRGGREKSV) show a composition bias toward basic and acidic residues. The segment covering 151–166 (LQTNNMHHPPVATSNK) has biased composition (polar residues). The EB1 C-terminal domain maps to 180–250 (GGSNSSAEVQ…LYATDANESV (71 aa)). Over residues 266 to 285 (GYEEEGKEEEEEEEEEEEEA) the composition is skewed to acidic residues.

It belongs to the MAPRE family. As to quaternary structure, homodimer and heterodimer with EB1A. Highly expressed in guard cells of leaf stomata, pollen grains and pollen tubes. Expressed in young roots.

The protein localises to the cytoplasm. It is found in the cytoskeleton. The protein resides in the spindle pole. It localises to the phragmoplast. Functionally, binds to the plus end of microtubules and regulates the dynamics of the microtubule cytoskeleton. May be involved in anchoring microtubules to their nucleation sites and/or functioning as a reservoir for distribution to the growing end. In plants, microtubule minus ends are not necessarily severed from the nucleation site and transported to the plus end of a microtubule as part of the recycling process. May play a role in endomembrane organization during polarized growth of plant cells. The chain is Microtubule-associated protein RP/EB family member 1B (EB1B) from Arabidopsis thaliana (Mouse-ear cress).